We begin with the raw amino-acid sequence, 453 residues long: Bifunctional protein GlmU (453 aa).

Residues 1–226 (MKFSTVILAA…SIEVEGVNDR (226 aa)) form a pyrophosphorylase region. UDP-N-acetyl-alpha-D-glucosamine-binding positions include 8–11 (LAAG), Lys22, Gln73, 78–79 (GT), 100–102 (YGD), Gly137, Glu151, Asn166, and Asn224. Residue Asp102 participates in Mg(2+) binding. Asn224 is a Mg(2+) binding site. The linker stretch occupies residues 227-247 (IQLARLERAFQARQAKKLLEQ). The interval 248-453 (GVMLRDPARF…AGWQRPAKKK (206 aa)) is N-acetyltransferase. UDP-N-acetyl-alpha-D-glucosamine-binding residues include Arg330 and Lys348. Catalysis depends on His360, which acts as the Proton acceptor. 2 residues coordinate UDP-N-acetyl-alpha-D-glucosamine: Tyr363 and Asn374. Residues Ala377, 383–384 (NY), Ser402, Ala420, and Arg437 contribute to the acetyl-CoA site.

This sequence in the N-terminal section; belongs to the N-acetylglucosamine-1-phosphate uridyltransferase family. In the C-terminal section; belongs to the transferase hexapeptide repeat family. In terms of assembly, homotrimer. Mg(2+) serves as cofactor.

The protein localises to the cytoplasm. The catalysed reaction is alpha-D-glucosamine 1-phosphate + acetyl-CoA = N-acetyl-alpha-D-glucosamine 1-phosphate + CoA + H(+). The enzyme catalyses N-acetyl-alpha-D-glucosamine 1-phosphate + UTP + H(+) = UDP-N-acetyl-alpha-D-glucosamine + diphosphate. It participates in nucleotide-sugar biosynthesis; UDP-N-acetyl-alpha-D-glucosamine biosynthesis; N-acetyl-alpha-D-glucosamine 1-phosphate from alpha-D-glucosamine 6-phosphate (route II): step 2/2. Its pathway is nucleotide-sugar biosynthesis; UDP-N-acetyl-alpha-D-glucosamine biosynthesis; UDP-N-acetyl-alpha-D-glucosamine from N-acetyl-alpha-D-glucosamine 1-phosphate: step 1/1. It functions in the pathway bacterial outer membrane biogenesis; LPS lipid A biosynthesis. In terms of biological role, catalyzes the last two sequential reactions in the de novo biosynthetic pathway for UDP-N-acetylglucosamine (UDP-GlcNAc). The C-terminal domain catalyzes the transfer of acetyl group from acetyl coenzyme A to glucosamine-1-phosphate (GlcN-1-P) to produce N-acetylglucosamine-1-phosphate (GlcNAc-1-P), which is converted into UDP-GlcNAc by the transfer of uridine 5-monophosphate (from uridine 5-triphosphate), a reaction catalyzed by the N-terminal domain. This chain is Bifunctional protein GlmU, found in Vibrio cholerae serotype O1 (strain ATCC 39541 / Classical Ogawa 395 / O395).